Here is a 569-residue protein sequence, read N- to C-terminus: Cysteine--tRNA ligase CPS1 homolog, chloroplastic/mitochondrial (569 aa).

A chloroplast and mitochondrion-targeting transit peptide spans 1–42 (MAAARRAAGLLPLLLSSPSRARLPHRQALALTPPLLRPHRLY). C99 lines the Zn(2+) pocket. The short motif at 101–111 (VTPYDDSHIGH) is the 'HIGH' region element. Zn(2+) contacts are provided by C279, H304, and E308. The 'KMSKS' region signature appears at 336 to 340 (KMSKS). K339 contacts ATP.

This sequence belongs to the class-I aminoacyl-tRNA synthetase family. Zn(2+) serves as cofactor.

It is found in the plastid. The protein resides in the chloroplast. It localises to the mitochondrion. The catalysed reaction is tRNA(Cys) + L-cysteine + ATP = L-cysteinyl-tRNA(Cys) + AMP + diphosphate. Its function is as follows. Nuclear genome-encoded factor required for normal assembly of chloroplast polysomes. The sequence is that of Cysteine--tRNA ligase CPS1 homolog, chloroplastic/mitochondrial from Oryza sativa subsp. japonica (Rice).